A 237-amino-acid polypeptide reads, in one-letter code: DCN1-like protein 5 (237 aa).

A phosphoserine mark is found at Ser9, Ser41, and Ser48. One can recognise a DCUN1 domain in the interval 46-232; that stretch reads FSSKKCLAWF…LLDEFVEWQK (187 aa).

As to quaternary structure, part of a complex that contains DCUN1D5, CUL1 and RBX1; this interaction is bridged by CUL1. Interacts (via the DCUN1 domain) with the unneddylated cullins: interacts with CUL1, CUL2, CUL3, CUL4A, CUL4B and CUL5; these interactions promote the cullin neddylation and the identity of the cullin dictates the affinity of the interaction. Interacts (via DCUN1 domain) with UBE2M (N-terminally acetylated form) and probably with UBE2F (N-terminally acetylated form). May also interact with regulators or subunits of cullin-RING ligases such as RBX1, RNF7, ELOB and DDB1; these interactions are bridged by cullins. Interacts with CAND1; this interaction is bridged by cullins and strongly inhibits the neddylation of cullins. These CAND-cullin-DCNL complexes can only be neddylated in the presence of a substrate adapter. Post-translationally, phosphorylation at Ser-41 is independent of cullin's interaction. Phosphorylated in response to both TICAM1 and MYD88 dependent Toll-like receptor (TLR) pathway activation. Phosphorylated in response to IL1B stimulation. Weakly expressed in testis, skin and immune tissues (thymus, spleen and lymph nodes).

It is found in the nucleus. It localises to the cytoplasm. Its subcellular location is the cytoskeleton. The protein localises to the spindle. Functionally, contributes to the neddylation of all cullins by transferring NEDD8 from N-terminally acetylated NEDD8-conjugating E2s enzyme to different cullin C-terminal domain-RBX complexes which is necessary for the activation of cullin-RING E3 ubiquitin ligases (CRLs). May play a role in DNA damage response and may participate in cell proliferation and anchorage-independent cell growth. The polypeptide is DCN1-like protein 5 (Homo sapiens (Human)).